Here is a 793-residue protein sequence, read N- to C-terminus: PC3-like endoprotease variant A (793 aa).

An N-terminal signal peptide occupies residues 1–29 (MNYRGIYRRRYVFVLLLLVAVVNISYGWT). Positions 30–152 (VLKNKDYKRR…QQKILERVKR (123 aa)) are excised as a propeptide. N62 and N190 each carry an N-linked (GlcNAc...) asparagine glycan. The Peptidase S8 domain maps to 164 to 486 (MWYLLNTGQA…FGRLDANAMV (323 aa)). Catalysis depends on charge relay system residues D202 and H242. Intrachain disulfides connect C259-C411 and C351-C381. The active-site Charge relay system is the S419. The P/Homo B domain maps to 495 to 638 (LPAQRKCTAA…EERVIDTQTK (144 aa)). A disulfide bridge connects residues C501 and C527.

It belongs to the peptidase S8 family. Furin subfamily. In terms of tissue distribution, predominantly in the body column.

Functionally, probably involved in the processing of hormone and other protein precursors at sites comprised of pairs of basic amino acid residues. In Hydra vulgaris (Hydra), this protein is PC3-like endoprotease variant A.